Consider the following 76-residue polypeptide: KANTR integral membrane protein (76 aa).

Positions 1–25 (MSPFSLLILVICAFSLFFLINLTRG) are cleaved as a signal peptide. Over 26-34 (LSILLVFSK) the chain is Extracellular. Residues 35–55 (NQLLALLLLSIVSLFSISLIS) traverse the membrane as a helical segment. The Cytoplasmic segment spans residues 56 to 76 (ALIFFDLLPSTFFGFILLFFF).

The protein localises to the membrane. The protein is KANTR integral membrane protein of Homo sapiens (Human).